Consider the following 405-residue polypeptide: Tryptophan synthase beta chain (405 aa).

Position 95 is an N6-(pyridoxal phosphate)lysine (K95).

The protein belongs to the TrpB family. Tetramer of two alpha and two beta chains. Pyridoxal 5'-phosphate is required as a cofactor.

It carries out the reaction (1S,2R)-1-C-(indol-3-yl)glycerol 3-phosphate + L-serine = D-glyceraldehyde 3-phosphate + L-tryptophan + H2O. It participates in amino-acid biosynthesis; L-tryptophan biosynthesis; L-tryptophan from chorismate: step 5/5. In terms of biological role, the beta subunit is responsible for the synthesis of L-tryptophan from indole and L-serine. The polypeptide is Tryptophan synthase beta chain (Pseudomonas putida (strain ATCC 47054 / DSM 6125 / CFBP 8728 / NCIMB 11950 / KT2440)).